The following is a 505-amino-acid chain: Lysine--tRNA ligase (505 aa).

Mg(2+)-binding residues include E415 and E422.

Belongs to the class-II aminoacyl-tRNA synthetase family. In terms of assembly, homodimer. Mg(2+) is required as a cofactor.

Its subcellular location is the cytoplasm. It carries out the reaction tRNA(Lys) + L-lysine + ATP = L-lysyl-tRNA(Lys) + AMP + diphosphate. The polypeptide is Lysine--tRNA ligase (Pectobacterium carotovorum subsp. carotovorum (strain PC1)).